The chain runs to 119 residues: Ribonuclease P protein component (119 aa).

The protein belongs to the RnpA family. As to quaternary structure, consists of a catalytic RNA component (M1 or rnpB) and a protein subunit.

The enzyme catalyses Endonucleolytic cleavage of RNA, removing 5'-extranucleotides from tRNA precursor.. Its function is as follows. RNaseP catalyzes the removal of the 5'-leader sequence from pre-tRNA to produce the mature 5'-terminus. It can also cleave other RNA substrates such as 4.5S RNA. The protein component plays an auxiliary but essential role in vivo by binding to the 5'-leader sequence and broadening the substrate specificity of the ribozyme. The sequence is that of Ribonuclease P protein component from Sodalis glossinidius (strain morsitans).